Here is a 109-residue protein sequence, read N- to C-terminus: Large ribosomal subunit protein uL22 (109 aa).

This sequence belongs to the universal ribosomal protein uL22 family. In terms of assembly, part of the 50S ribosomal subunit.

Its function is as follows. This protein binds specifically to 23S rRNA; its binding is stimulated by other ribosomal proteins, e.g. L4, L17, and L20. It is important during the early stages of 50S assembly. It makes multiple contacts with different domains of the 23S rRNA in the assembled 50S subunit and ribosome. The globular domain of the protein is located near the polypeptide exit tunnel on the outside of the subunit, while an extended beta-hairpin is found that lines the wall of the exit tunnel in the center of the 70S ribosome. The chain is Large ribosomal subunit protein uL22 from Bordetella avium (strain 197N).